The chain runs to 339 residues: UDP-N-acetylglucosamine/UDP-N-acetylgalactosamine transporter nstp-4 (339 aa).

The next 8 helical transmembrane spans lie at 44–64 (LSSTAVVCAEIIKLITCFFVI), 94–114 (LKVAVPAIMYVIQNNLLFFAL), 148–168 (YNWMALILLTAGVALVQYPSG), 186–206 (ILGLGAVLAACFSSGFAGVYF), 224–244 (LAFFSVFGALLVCWLYDWQAI), 255–275 (GVIWIVVLLQAYGGLVIALVV), 281–301 (ILKGFAVSLSIILSSFTSWLV), and 305–325 (LTITTTFAIGATVVIFATFLY).

It belongs to the nucleotide-sugar transporter family. SLC35A subfamily. As to expression, widely expressed, including in pharynx and pharyngeal gland cells, seam cells, spermatheca, stomatointestinal muscle, vulva, and body wall muscle.

It is found in the golgi apparatus membrane. Functionally, uridine diphosphate-N-acetylglucosamine (UDP-GlcNAc) transporter in the Golgi apparatus. UDP-N-acetylgalactosamine (UDP-GalNAc) transporter in the Golgi apparatus. Apparently transports UDP-GlcNAc and UDP-GalNAc simultaneously, and independently, by an unknown mechanism. Functions redundantly with nucleotide sugar transporter srf-3. May be involved in gonadal development. This chain is UDP-N-acetylglucosamine/UDP-N-acetylgalactosamine transporter nstp-4, found in Caenorhabditis elegans.